Consider the following 211-residue polypeptide: Thymidylate kinase (211 aa).

Residue 7–14 (GIDGCGKT) coordinates ATP.

This sequence belongs to the thymidylate kinase family.

It catalyses the reaction dTMP + ATP = dTDP + ADP. Its function is as follows. Phosphorylation of dTMP to form dTDP in both de novo and salvage pathways of dTTP synthesis. This chain is Thymidylate kinase, found in Anaplasma marginale (strain Florida).